The following is a 262-amino-acid chain: MATYAVLGATGNCGTALIDNLLRTEGAQIHAFCRNKPKLMQKMPALVDHKRVQIYEGSIDDIDLLAECIRGTRAIFHVVTTNDNVPGCQVGLDTAQSIIAALESLQALEPEGTKPPKIVLLSSGTIDDHLSRHMPSFFRRILRAAASHVYEDLRRTEAFLRAQPDGVSTIFIKPGGLSIDVQRGHALNLDRDESFVSYLDLAAAMIEAADDPDDRFDGKNVSVANTNGAARFPMGTPLCILTGLARHSFPWLHRYLPATGPG.

Belongs to the avfA family.

It participates in secondary metabolite biosynthesis. Its function is as follows. Oxidoreductase; part of the gene cluster that mediates the biosynthesis of agnestins, dihydroxy-xanthone metabolites. The pathway begins with the assembly and cyclization of atrochrysone thioester by the non-reducing polyketide synthase Agnpks1. The atrochrysone carboxyl ACP thioesterase AgnL7 then breaks the thioester bond and releases the atrochrysone carboxylic acid as the first enzyme-free intermediate. The decarboxylase AgnL1 then catalyzes the concerted decarboxylation-elimination required to convert atochrysone carboxylic acid into emodin anthrone, which is further oxidized to emodin by the anthrone oxygenase AgnL2. Emodin then undergoes reduction catalyzed by the oxidoreductase AgnL4 to yield the dihydroquinone tautomer which is the substrate for reduction by the short chain dehydrogenase AgnL6 reduction to produce hydroxyketone, followed by AgnL8 dehydration and likely spontaneous autoxidation to chrysophanol. Baeyer-Villiger oxidation by the oxidase AgnL3 leads to monodictyphenone via cleavage of the C-10/C-10a bond of chrysophanol. Alternative cleavage at the C-4a/C-10 bond of chrysophanol also leads to the formation some cephalone F. Further conversion to agnestins A and B, requires reduction to dihydro-monodictyphenone, oxidation to agnestin C probably via an epoxide, and rearrangement to either agnestin A or agnestin B directly, although agnestin A or agnestin B can also interconvert. Within the cluster, AgnR1 is the only unassigned oxidoreductase present which could be involved in this conversion. However, AgnR1 seems not to be involved in this step, and thus genes involved in the proposed oxidation/reduction may be located elsewhere on the genome. Further agnestin A derivatives are probably formed by spontaneous decarboxylations, dehydrations and methanolysis reactions. This is Oxidoreductase AgnL4 from Paecilomyces divaricatus (Penicillium divaricatum).